The sequence spans 648 residues: Biosynthetic arginine decarboxylase (648 aa).

Residue lysine 109 is modified to N6-(pyridoxal phosphate)lysine. 291–301 (LDVGGGLGVDY) lines the substrate pocket.

It belongs to the Orn/Lys/Arg decarboxylase class-II family. SpeA subfamily. The cofactor is Mg(2+). It depends on pyridoxal 5'-phosphate as a cofactor.

The catalysed reaction is L-arginine + H(+) = agmatine + CO2. In terms of biological role, catalyzes the biosynthesis of agmatine from arginine. This chain is Biosynthetic arginine decarboxylase, found in Prochlorococcus marinus (strain MIT 9313).